A 72-amino-acid chain; its full sequence is Translation initiation factor IF-1 (72 aa).

Positions 1-72 (MAKEDVIEIE…TRGRITYRFK (72 aa)) constitute an S1-like domain.

The protein belongs to the IF-1 family. As to quaternary structure, component of the 30S ribosomal translation pre-initiation complex which assembles on the 30S ribosome in the order IF-2 and IF-3, IF-1 and N-formylmethionyl-tRNA(fMet); mRNA recruitment can occur at any time during PIC assembly.

The protein resides in the cytoplasm. Its function is as follows. One of the essential components for the initiation of protein synthesis. Stabilizes the binding of IF-2 and IF-3 on the 30S subunit to which N-formylmethionyl-tRNA(fMet) subsequently binds. Helps modulate mRNA selection, yielding the 30S pre-initiation complex (PIC). Upon addition of the 50S ribosomal subunit IF-1, IF-2 and IF-3 are released leaving the mature 70S translation initiation complex. In Streptococcus agalactiae serotype Ia (strain ATCC 27591 / A909 / CDC SS700), this protein is Translation initiation factor IF-1.